A 393-amino-acid polypeptide reads, in one-letter code: Putative F-box protein At1g55070 (393 aa).

The F-box domain maps to 29-74 (GEYFDRIPADLVIKILSKLSAKSMAKCRCVCKLLSSIIRQPNYNQL).

The chain is Putative F-box protein At1g55070 from Arabidopsis thaliana (Mouse-ear cress).